Here is a 159-residue protein sequence, read N- to C-terminus: Small ribosomal subunit protein uS9 (159 aa).

Belongs to the universal ribosomal protein uS9 family.

This is Small ribosomal subunit protein uS9 from Beijerinckia indica subsp. indica (strain ATCC 9039 / DSM 1715 / NCIMB 8712).